A 320-amino-acid polypeptide reads, in one-letter code: GTP 3',8-cyclase (320 aa).

Positions Lys-5 to Pro-222 constitute a Radical SAM core domain. GTP is bound at residue Arg-14. Residues Cys-21, Cys-25, and Cys-28 each contribute to the [4Fe-4S] cluster site. Arg-65 contacts GTP. Gly-69 contacts S-adenosyl-L-methionine. Thr-96 is a binding site for GTP. Ser-120 provides a ligand contact to S-adenosyl-L-methionine. Position 157 (Lys-157) interacts with GTP. An S-adenosyl-L-methionine-binding site is contributed by Met-191. The [4Fe-4S] cluster site is built by Cys-253 and Cys-256. Arg-258 to Arg-260 lines the GTP pocket. Residue Cys-270 participates in [4Fe-4S] cluster binding.

The protein belongs to the radical SAM superfamily. MoaA family. Monomer and homodimer. The cofactor is [4Fe-4S] cluster.

The enzyme catalyses GTP + AH2 + S-adenosyl-L-methionine = (8S)-3',8-cyclo-7,8-dihydroguanosine 5'-triphosphate + 5'-deoxyadenosine + L-methionine + A + H(+). The protein operates within cofactor biosynthesis; molybdopterin biosynthesis. Functionally, catalyzes the cyclization of GTP to (8S)-3',8-cyclo-7,8-dihydroguanosine 5'-triphosphate. This is GTP 3',8-cyclase from Aquifex aeolicus (strain VF5).